We begin with the raw amino-acid sequence, 263 residues long: 1-(5-phosphoribosyl)-5-[(5-phosphoribosylamino)methylideneamino] imidazole-4-carboxamide isomerase (263 aa).

It belongs to the HisA/HisF family.

It is found in the cytoplasm. The enzyme catalyses 1-(5-phospho-beta-D-ribosyl)-5-[(5-phospho-beta-D-ribosylamino)methylideneamino]imidazole-4-carboxamide = 5-[(5-phospho-1-deoxy-D-ribulos-1-ylimino)methylamino]-1-(5-phospho-beta-D-ribosyl)imidazole-4-carboxamide. It functions in the pathway amino-acid biosynthesis; L-histidine biosynthesis; L-histidine from 5-phospho-alpha-D-ribose 1-diphosphate: step 4/9. In Eremothecium gossypii (strain ATCC 10895 / CBS 109.51 / FGSC 9923 / NRRL Y-1056) (Yeast), this protein is 1-(5-phosphoribosyl)-5-[(5-phosphoribosylamino)methylideneamino] imidazole-4-carboxamide isomerase (HIS6).